A 381-amino-acid chain; its full sequence is Peptidoglycan glycosyltransferase MrdB (381 aa).

10 helical membrane passes run 11 to 31 (FDLL…LLIF), 40 to 60 (KQGV…FIPF), 66 to 86 (WLFA…FMGS), 102 to 122 (ITLQ…AHLI), 132 to 152 (YDWG…ALIL), 156 to 176 (DLGT…IVGL), 180 to 200 (VWLP…HFLH), 263 to 283 (FGFL…LHLF), 297 to 317 (IVAL…IAMT), and 328 to 348 (LPLF…FAIL).

This sequence belongs to the SEDS family. MrdB/RodA subfamily.

It localises to the cell inner membrane. The enzyme catalyses [GlcNAc-(1-&gt;4)-Mur2Ac(oyl-L-Ala-gamma-D-Glu-L-Lys-D-Ala-D-Ala)](n)-di-trans,octa-cis-undecaprenyl diphosphate + beta-D-GlcNAc-(1-&gt;4)-Mur2Ac(oyl-L-Ala-gamma-D-Glu-L-Lys-D-Ala-D-Ala)-di-trans,octa-cis-undecaprenyl diphosphate = [GlcNAc-(1-&gt;4)-Mur2Ac(oyl-L-Ala-gamma-D-Glu-L-Lys-D-Ala-D-Ala)](n+1)-di-trans,octa-cis-undecaprenyl diphosphate + di-trans,octa-cis-undecaprenyl diphosphate + H(+). Its pathway is cell wall biogenesis; peptidoglycan biosynthesis. Peptidoglycan polymerase that is essential for cell wall elongation. In Helicobacter pylori (strain J99 / ATCC 700824) (Campylobacter pylori J99), this protein is Peptidoglycan glycosyltransferase MrdB.